The sequence spans 592 residues: Aspartate--tRNA(Asp/Asn) ligase (592 aa).

An L-aspartate-binding site is contributed by Glu182. The segment at 206–209 (QIFK) is aspartate. Residue Arg228 participates in L-aspartate binding. Residues 228 to 230 (RDE) and Gln237 each bind ATP. Position 455 (His455) interacts with L-aspartate. Glu489 is a binding site for ATP. Position 496 (Arg496) interacts with L-aspartate. An ATP-binding site is contributed by 541–544 (GLDR).

Belongs to the class-II aminoacyl-tRNA synthetase family. Type 1 subfamily. Homodimer.

The protein resides in the cytoplasm. It carries out the reaction tRNA(Asx) + L-aspartate + ATP = L-aspartyl-tRNA(Asx) + AMP + diphosphate. Its function is as follows. Aspartyl-tRNA synthetase with relaxed tRNA specificity since it is able to aspartylate not only its cognate tRNA(Asp) but also tRNA(Asn). Reaction proceeds in two steps: L-aspartate is first activated by ATP to form Asp-AMP and then transferred to the acceptor end of tRNA(Asp/Asn). This Thermoanaerobacter sp. (strain X514) protein is Aspartate--tRNA(Asp/Asn) ligase.